The chain runs to 317 residues: UV DNA damage endonuclease (317 aa).

This sequence belongs to the uve1/UvsE family.

In terms of biological role, component in a DNA repair pathway. Removal of UV LIGHT damaged nucleotides. Recognizes pyrimidine dimers and cleave a phosphodiester bond immediately 5' to the lesion. The sequence is that of UV DNA damage endonuclease from Bacillus cereus (strain 03BB102).